The following is an 860-amino-acid chain: Protein argonaute-3 (860 aa).

At methionine 1 the chain carries N-acetylmethionine. Residues 230 to 349 (PVIQFMCEVL…LPLEVCNIVA (120 aa)) enclose the PAZ domain. The 302-residue stretch at 518 to 819 (LIIVILPGKT…VAFRARYHLV (302 aa)) folds into the Piwi domain. Residues 530 to 567 (YAEVKRVGDTLLGMATQCVQVKNVIKTSPQTLSNLCLK) are interaction with guide RNA. Residues aspartate 598, glutamate 638, and aspartate 670 each coordinate a divalent metal cation. The interval 758-805 (QGTSRPSHYHVLWDDNFFTADELQLLTYQLCHTYVRCTRSVSIPAPAY) is interaction with guide RNA. Residue histidine 808 coordinates a divalent metal cation. Serine 825 is modified (phosphoserine).

Belongs to the argonaute family. Ago subfamily. In terms of assembly, interacts with EIF4B, IMP8, PRMT5 and TNRC6B. Interacts with APOBEC3F, APOBEC3G and APOBEC3H. Interacts with EDC4. Post-translationally, ubiquitinated on surface-exposed lysines by a SCF-like E3 ubiquitin-protein ligase complex containing ZSWIM8 during target-directed microRNA degradation (TDMD), a process that mediates degradation of microRNAs (miRNAs). Ubiquitination by the SCF-like E3 ubiquitin-protein ligase complex containing ZSWIM8 leads to its subsequent degradation, thereby exposing miRNAs for degradation. ZSWIM8 recognizes and binds AGO3 when it is engaged with a TDMD target.

The protein resides in the cytoplasm. It localises to the P-body. The catalysed reaction is Endonucleolytic cleavage to 5'-phosphomonoester.. Required for RNA-mediated gene silencing (RNAi). Binds to short RNAs such as microRNAs (miRNAs) and represses the translation of mRNAs which are complementary to them. Proposed to be involved in stabilization of small RNA derivates (siRNA) derived from processed RNA polymerase III-transcribed Alu repeats containing a DR2 retinoic acid response element (RARE) in stem cells and in the subsequent siRNA-dependent degradation of a subset of RNA polymerase II-transcribed coding mRNAs by recruiting a mRNA decapping complex involving EDC4. Possesses RNA slicer activity but only on select RNAs bearing 5'- and 3'-flanking sequences to the region of guide-target complementarity. This chain is Protein argonaute-3 (Ago3), found in Mus musculus (Mouse).